The sequence spans 659 residues: Zinc finger protein 304 (659 aa).

Positions valine 14 to alanine 88 constitute a KRAB domain. C2H2-type zinc fingers lie at residues histidine 89–histidine 111, lysine 115–histidine 139, phenylalanine 251–histidine 273, histidine 279–histidine 301, tyrosine 307–histidine 329, tyrosine 335–histidine 357, tyrosine 363–histidine 385, tyrosine 391–histidine 413, tyrosine 419–histidine 441, tyrosine 447–histidine 469, tyrosine 475–histidine 497, tyrosine 503–histidine 525, tyrosine 531–histidine 553, tyrosine 559–histidine 581, tyrosine 587–histidine 609, and tyrosine 615–histidine 637.

The protein belongs to the krueppel C2H2-type zinc-finger protein family. In terms of assembly, probably part of a corepressor complex containing ZNF304, TRIM28, SETDB1 and DNMT1; leading to promoter hypermethylation and transcriptional silencing. Probably associates with Polycomb group (PcG) complexes; leading to trimethylation of 'Lys-27' of histone H3 (H3K27me3). Interacts with USP28. Post-translationally, deubiquitinated by USP28; the deubiquitination leads to the stabilization of ZNF304 from proteolytic degradation. In terms of tissue distribution, expressed in undifferentiated embryonic stem cells (ESCs). Expressed strongly in colorectal cancers cells (CRCs). Expressed strongly in ovarian carcinoma (OC) tumor cell lines compared to non-transformed ovarian epithelial cells (at protein level). Expressed in lymphoid tissues, thyroid, adrenal gland, prostate, pancreas and skeletal muscles.

The protein resides in the nucleus. In terms of biological role, acts as a transcriptional regulator and plays a role in gene silencing. Probably forms a corepressor complex required for activated KRAS-mediated promoter hypermethylation and transcriptional silencing of several tumor suppressor genes (TSGs) or other tumor-related genes in colorectal cancer (CRC) cells. Also required to maintain a transcriptionally repressive state of genes in undifferentiated embryonic stem cells (ESCs) by inducing trimethylation of 'Lys-27' of histone H3 (H3K27me3) in a Polycomb group (PcG) complexes-dependent manner. Associates at promoter regions of TSGs and mediates the recruitment of the corepressor complex containing the scaffolding protein TRIM28, methyltransferase DNMT1 and histone methyltransferase SETDB1 and/or the PcG complexes at those sites. Transcription factor involved in the metastatic cascade process by inducing cell migration and proliferation and gain resistance to anoikis of ovarian carcinoma (OC) cells via integrin-mediated signaling pathways. Associates with the ITGB1 promoter and positively regulates beta-1 integrin transcription expression. Promotes angiogenesis. Promotes tumor growth. The polypeptide is Zinc finger protein 304 (Homo sapiens (Human)).